The primary structure comprises 495 residues: MAANWTLSWGQGGPCNSPGSDTPRSVASPETQLGNHDRNPETWHMNFRMFSCPEESDPIQALRKLTELCHLWLRPDLHTKEQILDMLVMEQFMISMPQELQVLVKVNGVQSCKDLEDLLRNNRRPKKWSIVNLLGKEYLMLNSDVEMAEAPASVRDDPRDVSSQWASSVNQMHPGTGQARREQQILPRVAALSRRQGEDFLLHKSIDVTGDPNSPRPKQTLEKDLKENREENPGLSSPEPQLPKSPNLVRAKEGKEPQKRASVENVDADTPSACVVEREALTHSGNRGDALNLSSPKRSKPDASSISQEEPQGEATPVGNRESPGQAEINPVHSPGPAGPVSHPDGQEAKALPPFACDVCNKSFKYFSQLSIHRRSHTGDRPFQCDLCRKRFLQPSDLRVHQRVHTGERPYMCDVCQKRFAHESTLQGHKRIHTGERPFKCKYCSKVFSHKGNLNVHQRTHSGEKPYKCPTCQKAFRQLGTFKRHLKTHRETTSQ.

The tract at residues 1–40 is disordered; it reads MAANWTLSWGQGGPCNSPGSDTPRSVASPETQLGNHDRNP. The span at 17–34 shows a compositional bias: polar residues; that stretch reads SPGSDTPRSVASPETQLG. In terms of domain architecture, SCAN box spans 44–126; the sequence is HMNFRMFSCP…DLLRNNRRPK (83 aa). 2 disordered regions span residues 150–183 and 227–347; these read APASVRDDPRDVSSQWASSVNQMHPGTGQARREQ and ENRE…PDGQ. Residues 161–173 show a composition bias toward polar residues; sequence VSSQWASSVNQMH. Residues 250–262 show a composition bias toward basic and acidic residues; the sequence is RAKEGKEPQKRAS. Polar residues predominate over residues 292-310; that stretch reads NLSSPKRSKPDASSISQEE. 5 C2H2-type zinc fingers span residues 355 to 377, 383 to 405, 411 to 433, 439 to 461, and 467 to 489; these read FACDVCNKSFKYFSQLSIHRRSH, FQCDLCRKRFLQPSDLRVHQRVH, YMCDVCQKRFAHESTLQGHKRIH, FKCKYCSKVFSHKGNLNVHQRTH, and YKCPTCQKAFRQLGTFKRHLKTH.

The protein resides in the nucleus. In terms of biological role, may be involved in transcriptional regulation. The chain is Zinc finger and SCAN domain-containing protein 5B (ZSCAN5B) from Homo sapiens (Human).